A 276-amino-acid polypeptide reads, in one-letter code: Transcriptional antiactivator ExsD (276 aa).

As to quaternary structure, can form homotrimer. Interacts with ExsA; this interaction inhibits ExsA activity. Interacts with ExsC; this interaction dissociates the ExsD-ExsA complex.

Negative regulator of the type III secretion system regulon. Acts by disrupting transcriptional activator ExsA self-association and DNA-binding activity in absence of inducing signals. Upon host cell contact, this interaction is disrupted by the anti-antiactivator protein ExsC leading to ExsA activation. The protein is Transcriptional antiactivator ExsD (exsD) of Pseudomonas aeruginosa (strain ATCC 15692 / DSM 22644 / CIP 104116 / JCM 14847 / LMG 12228 / 1C / PRS 101 / PAO1).